The chain runs to 186 residues: ATP-dependent protease subunit HslV (186 aa).

Thr13 is a catalytic residue. 3 residues coordinate Na(+): Ala167, Cys170, and Thr173.

It belongs to the peptidase T1B family. HslV subfamily. In terms of assembly, a double ring-shaped homohexamer of HslV is capped on each side by a ring-shaped HslU homohexamer. The assembly of the HslU/HslV complex is dependent on binding of ATP.

It localises to the cytoplasm. The catalysed reaction is ATP-dependent cleavage of peptide bonds with broad specificity.. With respect to regulation, allosterically activated by HslU binding. Protease subunit of a proteasome-like degradation complex believed to be a general protein degrading machinery. The chain is ATP-dependent protease subunit HslV from Allorhizobium ampelinum (strain ATCC BAA-846 / DSM 112012 / S4) (Agrobacterium vitis (strain S4)).